Consider the following 466-residue polypeptide: F-box/LRR-repeat protein fbxl-1 (466 aa).

In terms of domain architecture, F-box spans Ser-54 to Val-100. LRR repeat units follow at residues Gly-122 to Arg-147, Cys-148 to Tyr-173, Cys-174 to Gly-199, Cys-200 to Asn-225, Cys-226 to His-251, Met-252 to Gly-277, Ala-278 to His-303, Ser-304 to Gly-329, Cys-330 to Asn-355, Cys-356 to Lys-381, and Cys-408 to His-433.

In terms of assembly, component of the SCF (SKP1-CUL1-F-box protein)-type E3 ubiquitin ligase complex. Expressed in neuroglial cells such as the socket cell and sheath cell, neurosecretory motor neurons and regions around the pharynx and anus.

It is found in the perikaryon. The protein resides in the cell projection. The protein localises to the dendrite. It localises to the cilium. Its subcellular location is the axon. Its function is as follows. Substrate-recognition component of the SCF (SKP1-CUL1-F-box protein)-type E3 ubiquitin ligase complex. Plays a role in regulating the entry into the dauer state. In hermaphrodites, may play a role in modulating the rate of defecation. In Caenorhabditis elegans, this protein is F-box/LRR-repeat protein fbxl-1.